A 2283-amino-acid chain; its full sequence is Serine-rich adhesin for platelets (2283 aa).

The first 89 residues, 1–89 (MSKRQKAFHD…VNMLHDQQAF (89 aa)), serve as a signal peptide directing secretion. The segment at 90–230 (AASDAPLTSE…KTSTTSTSTA (141 aa)) is serine-rich repeat region 1, SRR1. The segment covering 100–111 (LNTQSETVGNQN) has biased composition (polar residues). Disordered stretches follow at residues 100–230 (LNTQ…TSTA), 691–721 (NSGN…GTPT), and 751–2255 (NSMS…GLLG). The span at 112–128 (STTIEASTSTADSTSVT) shows a compositional bias: low complexity. Over residues 129–140 (KNSSSVQTSNSD) the composition is skewed to polar residues. A compositionally biased stretch (low complexity) spans 149–229 (NVTSTTNSTS…NKTSTTSTST (81 aa)). The tract at residues 231-751 (PVKLRTFSRL…TTFKYEVTRN (521 aa)) is non-repeat region (NRR). 3 stretches are compositionally biased toward low complexity: residues 752–1323 (SMSD…SDSI), 1330–1894 (SLSA…QSSS), and 1901–2225 (DSMS…SATS). Residues 752 to 2244 (SMSDSVSTSG…AQSEERLPDT (1493 aa)) are serine-rich repeat region 2, SRR2. Positions 2241-2245 (LPDTG) match the LPXTG sorting signal motif. Pentaglycyl murein peptidoglycan amidated threonine is present on Thr-2244. A propeptide spans 2245-2283 (GESIKQNGLLGGIMTLLVGLGLMKRKKKKDENDQDDSQA) (removed by sortase).

This sequence belongs to the serine-rich repeat protein (SRRP) family. Post-translationally, proteolytically cleaved by a metalloprotease. In terms of processing, glycosylated. It is probable that most of the Ser residues in SSR1 and SSR2 are O-GlcNAcylated. Sequential glycosylation by sugar transferases are able to generate complex sugar polymorphisms.

The protein resides in the secreted. It is found in the cell wall. Its function is as follows. Mediates binding to human platelets, possibly through a receptor-ligand interaction. Probably associated with virulence in endovascular infection. The protein is Serine-rich adhesin for platelets (sraP) of Staphylococcus aureus.